The following is a 75-amino-acid chain: Endogenous retrovirus group K member 10 Np9 protein (75 aa).

Residues proline 21 to lysine 43 are disordered. A compositionally biased stretch (basic and acidic residues) spans threonine 32–lysine 43.

It localises to the nucleus. Its function is as follows. May possess a function in tumorigenesis. The chain is Endogenous retrovirus group K member 10 Np9 protein (ERVK-10) from Homo sapiens (Human).